Reading from the N-terminus, the 232-residue chain is Large ribosomal subunit protein uL1 (232 aa).

Belongs to the universal ribosomal protein uL1 family. Part of the 50S ribosomal subunit.

Functionally, binds directly to 23S rRNA. The L1 stalk is quite mobile in the ribosome, and is involved in E site tRNA release. Protein L1 is also a translational repressor protein, it controls the translation of the L11 operon by binding to its mRNA. The polypeptide is Large ribosomal subunit protein uL1 (Methylorubrum populi (strain ATCC BAA-705 / NCIMB 13946 / BJ001) (Methylobacterium populi)).